We begin with the raw amino-acid sequence, 284 residues long: SF-assemblin (284 aa).

A disordered region spans residues 1-30; it reads PTPSPEARVASRPFLDSPLPGSPRSGSPTG. Positions 1-38 are nonhelical region; sequence PTPSPEARVASRPFLDSPLPGSPRSGSPTGYITATKAI. Positions 17 to 30 are enriched in low complexity; it reads SPLPGSPRSGSPTG. The rod stretch occupies residues 39 to 284; the sequence is SAGKLEHVAE…QDGLRIVNNS (246 aa). 2 coiled-coil regions span residues 56 to 102 and 239 to 268; these read EIEL…QIQV and LDEI…QAVN.

Belongs to the SF-assemblin family. Post-translationally, consists of at least four isoforms including two phosphorylated.

The protein localises to the cytoplasm. The protein resides in the cytoskeleton. Its function is as follows. Major component of the striated microtubule-associated fibers (SMAFs; system-I-fibers). This is SF-assemblin from Spermatozopsis similis (Green alga).